The chain runs to 526 residues: ATP synthase subunit alpha (526 aa).

171 to 178 (GDRQTGKT) provides a ligand contact to ATP.

This sequence belongs to the ATPase alpha/beta chains family. As to quaternary structure, F-type ATPases have 2 components, CF(1) - the catalytic core - and CF(0) - the membrane proton channel. CF(1) has five subunits: alpha(3), beta(3), gamma(1), delta(1), epsilon(1). CF(0) has four main subunits: a(1), b(1), b'(1) and c(9-12).

It is found in the cell inner membrane. The enzyme catalyses ATP + H2O + 4 H(+)(in) = ADP + phosphate + 5 H(+)(out). In terms of biological role, produces ATP from ADP in the presence of a proton gradient across the membrane. The alpha chain is a regulatory subunit. The protein is ATP synthase subunit alpha of Chlorobium phaeovibrioides (strain DSM 265 / 1930) (Prosthecochloris vibrioformis (strain DSM 265)).